The sequence spans 975 residues: Glycine dehydrogenase (decarboxylating) (975 aa).

At Lys723 the chain carries N6-(pyridoxal phosphate)lysine.

Belongs to the GcvP family. In terms of assembly, the glycine cleavage system is composed of four proteins: P, T, L and H. Requires pyridoxal 5'-phosphate as cofactor.

It catalyses the reaction N(6)-[(R)-lipoyl]-L-lysyl-[glycine-cleavage complex H protein] + glycine + H(+) = N(6)-[(R)-S(8)-aminomethyldihydrolipoyl]-L-lysyl-[glycine-cleavage complex H protein] + CO2. The glycine cleavage system catalyzes the degradation of glycine. The P protein binds the alpha-amino group of glycine through its pyridoxal phosphate cofactor; CO(2) is released and the remaining methylamine moiety is then transferred to the lipoamide cofactor of the H protein. This Burkholderia cenocepacia (strain HI2424) protein is Glycine dehydrogenase (decarboxylating).